Consider the following 104-residue polypeptide: Large ribosomal subunit protein bL21 (104 aa).

This sequence belongs to the bacterial ribosomal protein bL21 family. Part of the 50S ribosomal subunit. Contacts protein L20.

This protein binds to 23S rRNA in the presence of protein L20. This Gluconacetobacter diazotrophicus (strain ATCC 49037 / DSM 5601 / CCUG 37298 / CIP 103539 / LMG 7603 / PAl5) protein is Large ribosomal subunit protein bL21.